The primary structure comprises 169 residues: Calcium-binding protein G (169 aa).

4 EF-hand domains span residues 9-44 (KIFQ…KMNG), 60-83 (VDMD…QAKK), 92-127 (AALA…QGYN), and 133-162 (DYVL…KRLA). Residues Asp-105, Asp-107, Asp-109, Lys-111, Glu-116, Asp-140, Asp-142, Asp-144, Tyr-146, and Glu-151 each coordinate Ca(2+).

The sequence is that of Calcium-binding protein G (cbpG) from Dictyostelium discoideum (Social amoeba).